We begin with the raw amino-acid sequence, 357 residues long: Isoflavone 7-O-methyltransferase (357 aa).

Residues 200–203 (VGGG), Asp224, 224–225 (DR), 244–245 (DM), and Lys258 each bind S-adenosyl-L-methionine. Residue His262 is the Proton acceptor of the active site.

The protein belongs to the class I-like SAM-binding methyltransferase superfamily. Cation-independent O-methyltransferase family. COMT subfamily.

The enzyme catalyses a 7-hydroxyisoflavone + S-adenosyl-L-methionine = a 7-methoxyisoflavone + S-adenosyl-L-homocysteine + H(+). 7-O-methyltransferase involved in the biosynthesis of isoformononetin. Can use daidzein as substrate, but not medicarpin or 2,7,4'-trihydroxyisoflavanone. The polypeptide is Isoflavone 7-O-methyltransferase (D7OMT) (Glycyrrhiza echinata (Licorice)).